Here is a 227-residue protein sequence, read N- to C-terminus: Acyl-protein thioesterase 1 (227 aa).

Active-site charge relay system residues include S119, D173, and H207.

This sequence belongs to the AB hydrolase superfamily. AB hydrolase 2 family.

It localises to the cytoplasm. Its subcellular location is the nucleus. It catalyses the reaction S-hexadecanoyl-L-cysteinyl-[protein] + H2O = L-cysteinyl-[protein] + hexadecanoate + H(+). Its function is as follows. Hydrolyzes fatty acids from S-acylated cysteine residues in proteins with a strong preference for palmitoylated G-alpha proteins over other acyl substrates. Mediates the deacylation of G-alpha proteins such as GPA1 in vivo, but has weak or no activity toward palmitoylated Ras proteins. Has weak lysophospholipase activity in vitro; however such activity may not exist in vivo. This Saccharomyces cerevisiae (strain ATCC 204508 / S288c) (Baker's yeast) protein is Acyl-protein thioesterase 1.